Consider the following 655-residue polypeptide: FYVE, RhoGEF and PH domain-containing protein 2 (655 aa).

Phosphoserine occurs at positions 10, 39, and 47. Disordered regions lie at residues 21 to 52 and 84 to 103; these read NRTPGEAPGSHSLEDQPHSPEHQLSLSPEPWE and WRRSCQPGVSPGPETQEPEE. Residues 32–41 are compositionally biased toward basic and acidic residues; the sequence is SLEDQPHSPE. Positions 102–290 constitute a DH domain; sequence EEKRVVRELL…FSAAQHSNAA (189 aa). One can recognise a PH 1 domain in the interval 319–418; sequence TLLREGPVLK…WMQACQAAID (100 aa). Residues 458–518 form an FYVE-type zinc finger; sequence DKMVTMCMRC…VCLTCYTFLT (61 aa). 8 residues coordinate Zn(2+): Cys464, Cys467, Cys481, Cys484, Cys489, Cys492, Cys510, and Cys513. A PH 2 domain is found at 544-641; that stretch reads QSLVCSFLQL…WVTAIKRAAS (98 aa). Position 644 is a phosphothreonine (Thr644). Ser654 is subject to Phosphoserine.

In terms of tissue distribution, lymph node, spleen, B-lymphocytes and macrophages (at protein level). Expressed at high levels in lymph node, spleen, B-lymphocytes and bone marrow macrophages. Expressed at lower levels in mature bone marrow dendritic cells. In both immature and mature B-cells, expression is down-regulated by prior B-cell receptor signaling. Expression remains high in resting B and memory cells but declines upon differentiation into plasma cells.

The protein localises to the cytoplasm. The protein resides in the nucleus. It localises to the early endosome. Its subcellular location is the early endosome membrane. It is found in the cell projection. The protein localises to the ruffle membrane. The protein resides in the cytoskeleton. Activates CDC42, a member of the Ras-like family of Rho- and Rac proteins, by exchanging bound GDP for free GTP. Activates JNK1 via CDC42 but not RAC1. Binds to phosphatidylinositol 4,5-bisphosphate, phosphatidylinositol 3,4,5-trisphosphate, phosphatidylinositol 5-monophosphate, phosphatidylinositol 4-monophosphate and phosphatidylinositol 3-monophosphate. This is FYVE, RhoGEF and PH domain-containing protein 2 (Fgd2) from Mus musculus (Mouse).